The primary structure comprises 64 residues: Prokaryotic ubiquitin-like protein UBact (64 aa).

Positions 1–64 are disordered; that stretch reads MFNGEEVILF…SERYRQRTGE (64 aa). A compositionally biased stretch (basic and acidic residues) spans 22-64; the sequence is REIHKDAPAPKRPETKKTGDRLMDRMKKVDPNQSERYRQRTGE. Glutamate 64 is covalently cross-linked (Isoglutamyl lysine isopeptide (Glu-Lys) (interchain with K-? in acceptor proteins)).

The protein belongs to the ubiquitin-like protein UBact family.

Functionally, may function as a protein modifier covalently attached to lysine residues of substrate proteins. This may serve to target the modified proteins for degradation by proteasomes. This Leptospirillum ferriphilum (strain ML-04) protein is Prokaryotic ubiquitin-like protein UBact.